The sequence spans 578 residues: Asparagine synthetase [glutamine-hydrolyzing] 3 (578 aa).

Residue C2 is the For GATase activity of the active site. One can recognise a Glutamine amidotransferase type-2 domain in the interval 2–185; it reads CGILAVLGCV…PGHIYSSKQG (184 aa). L-glutamine is bound by residues 50 to 54, 75 to 77, and D98; these read RLAIV and NGE. An Asparagine synthetase domain is found at 210 to 450; the sequence is VRNTFEKAVI…LPKHILYRQK (241 aa). Residues L231, I267, and 341-342 contribute to the ATP site; that span reads SG. A compositionally biased stretch (basic and acidic residues) spans 555–572; that stretch reads GEDKTEDSRPEKLQKLAE. The segment at 555 to 578 is disordered; that stretch reads GEDKTEDSRPEKLQKLAEKTPAIV.

It carries out the reaction L-aspartate + L-glutamine + ATP + H2O = L-asparagine + L-glutamate + AMP + diphosphate + H(+). The protein operates within amino-acid biosynthesis; L-asparagine biosynthesis. In terms of biological role, essential for nitrogen assimilation, distribution and remobilization within the plant via the phloem. The sequence is that of Asparagine synthetase [glutamine-hydrolyzing] 3 (ASN3) from Arabidopsis thaliana (Mouse-ear cress).